The following is a 293-amino-acid chain: Pantothenate synthetase (293 aa).

Position 30–37 (30–37 (MGYLHKGH)) interacts with ATP. The active-site Proton donor is the His37. Residue Gln61 participates in (R)-pantoate binding. Gln61 contacts beta-alanine. 147–150 (GEKD) lines the ATP pocket. A (R)-pantoate-binding site is contributed by Gln153. Residues Val176 and 184-187 (CSSR) each bind ATP.

This sequence belongs to the pantothenate synthetase family. In terms of assembly, homodimer.

The protein localises to the cytoplasm. The enzyme catalyses (R)-pantoate + beta-alanine + ATP = (R)-pantothenate + AMP + diphosphate + H(+). Its pathway is cofactor biosynthesis; (R)-pantothenate biosynthesis; (R)-pantothenate from (R)-pantoate and beta-alanine: step 1/1. Catalyzes the condensation of pantoate with beta-alanine in an ATP-dependent reaction via a pantoyl-adenylate intermediate. In Brucella melitensis biotype 2 (strain ATCC 23457), this protein is Pantothenate synthetase.